The following is a 590-amino-acid chain: Putative DEAD-box ATP-dependent RNA helicase 51 (590 aa).

The interval 1–81 (MHPIKLCARS…KQGEGKKGSG (81 aa)) is disordered. The segment covering 40-51 (AACNSEGENNAT) has biased composition (polar residues). Positions 59–78 (NKKMKEEKSKRKKKQGEGKK) are enriched in basic and acidic residues. Positions 86–114 (KLFSDLPISDLTANAIRDMNYTHLTEIQA) match the Q motif motif. The Helicase ATP-binding domain maps to 117–293 (IPPLMLGSDV…KLTFGSKEER (177 aa)). Residue 130 to 137 (AKTGSGKT) coordinates ATP. Residues 240–243 (DEAD) carry the DEAD box motif. One can recognise a Helicase C-terminal domain in the interval 329 to 481 (VLYAFLKKAL…ELVPKLQPYL (153 aa)). Positions 549 to 590 (LESSASKHRKKRNVNTGRRHGIGPSNPYGRKGSDDRRQFARF) are disordered. The span at 554 to 569 (SKHRKKRNVNTGRRHG) shows a compositional bias: basic residues. A compositionally biased stretch (basic and acidic residues) spans 579–590 (KGSDDRRQFARF).

The protein belongs to the DEAD box helicase family. DDX18/HAS1 subfamily.

It carries out the reaction ATP + H2O = ADP + phosphate + H(+). The chain is Putative DEAD-box ATP-dependent RNA helicase 51 from Oryza sativa subsp. japonica (Rice).